The chain runs to 166 residues: Large ribosomal subunit protein uL10 (166 aa).

It belongs to the universal ribosomal protein uL10 family. As to quaternary structure, part of the ribosomal stalk of the 50S ribosomal subunit. The N-terminus interacts with L11 and the large rRNA to form the base of the stalk. The C-terminus forms an elongated spine to which L12 dimers bind in a sequential fashion forming a multimeric L10(L12)X complex.

Its function is as follows. Forms part of the ribosomal stalk, playing a central role in the interaction of the ribosome with GTP-bound translation factors. The sequence is that of Large ribosomal subunit protein uL10 from Stutzerimonas stutzeri (strain A1501) (Pseudomonas stutzeri).